Consider the following 310-residue polypeptide: tRNA uridine(34) hydroxylase (310 aa).

The Rhodanese domain occupies 127-225; it reads KNQNTIVIDT…YLDEISKEEN (99 aa). Cys185 (cysteine persulfide intermediate) is an active-site residue.

It belongs to the TrhO family.

It catalyses the reaction uridine(34) in tRNA + AH2 + O2 = 5-hydroxyuridine(34) in tRNA + A + H2O. Functionally, catalyzes oxygen-dependent 5-hydroxyuridine (ho5U) modification at position 34 in tRNAs. The sequence is that of tRNA uridine(34) hydroxylase from Prochlorococcus marinus (strain MIT 9215).